A 205-amino-acid polypeptide reads, in one-letter code: Large ribosomal subunit protein eL15 (205 aa).

Disordered stretches follow at residues 70–90 and 172–197; these read GRKR…HGVN and RGLR…KRRN.

This sequence belongs to the eukaryotic ribosomal protein eL15 family.

This chain is Large ribosomal subunit protein eL15 (rpl15-1), found in Dictyostelium discoideum (Social amoeba).